A 377-amino-acid chain; its full sequence is Methionine import ATP-binding protein MetN 2 (377 aa).

The ABC transporter domain occupies I25 to L262. G59–S66 contacts ATP.

It belongs to the ABC transporter superfamily. Methionine importer (TC 3.A.1.24) family. The complex is composed of two ATP-binding proteins (MetN), two transmembrane proteins (MetI) and a solute-binding protein (MetQ).

The protein localises to the cell inner membrane. The enzyme catalyses L-methionine(out) + ATP + H2O = L-methionine(in) + ADP + phosphate + H(+). It catalyses the reaction D-methionine(out) + ATP + H2O = D-methionine(in) + ADP + phosphate + H(+). Part of the ABC transporter complex MetNIQ involved in methionine import. Responsible for energy coupling to the transport system. The sequence is that of Methionine import ATP-binding protein MetN 2 from Rhodopseudomonas palustris (strain ATCC BAA-98 / CGA009).